We begin with the raw amino-acid sequence, 224 residues long: Small ribosomal subunit protein uS5 (224 aa).

Positions 1–40 are disordered; it reads MAEQPAGGQGAGDSRDSRGDRDSRGRRGDGGRGGRDRDGD. The segment covering 13–40 has biased composition (basic and acidic residues); it reads DSRDSRGDRDSRGRRGDGGRGGRDRDGD. The region spanning 44 to 107 is the S5 DRBM domain; it reads YLERVVAINR…EEARKGFFRV (64 aa).

It belongs to the universal ribosomal protein uS5 family. Part of the 30S ribosomal subunit. Contacts proteins S4 and S8.

With S4 and S12 plays an important role in translational accuracy. In terms of biological role, located at the back of the 30S subunit body where it stabilizes the conformation of the head with respect to the body. The chain is Small ribosomal subunit protein uS5 from Mycolicibacterium paratuberculosis (strain ATCC BAA-968 / K-10) (Mycobacterium paratuberculosis).